Here is a 138-residue protein sequence, read N- to C-terminus: Putative pre-16S rRNA nuclease (138 aa).

It belongs to the YqgF nuclease family.

It is found in the cytoplasm. Functionally, could be a nuclease involved in processing of the 5'-end of pre-16S rRNA. This is Putative pre-16S rRNA nuclease from Enterobacter sp. (strain 638).